The sequence spans 864 residues: Leucine--tRNA ligase (864 aa).

A 'HIGH' region motif is present at residues 42 to 52; sequence PYPSGKLHMGH. Residues 622-626 carry the 'KMSKS' region motif; it reads KMSKS. Position 625 (K625) interacts with ATP.

The protein belongs to the class-I aminoacyl-tRNA synthetase family.

It localises to the cytoplasm. It carries out the reaction tRNA(Leu) + L-leucine + ATP = L-leucyl-tRNA(Leu) + AMP + diphosphate. This chain is Leucine--tRNA ligase, found in Cellvibrio japonicus (strain Ueda107) (Pseudomonas fluorescens subsp. cellulosa).